Consider the following 296-residue polypeptide: Bifunctional protein FolD (296 aa).

Residues 168–170 (GRS), Ser-197, and Thr-238 each bind NADP(+).

It belongs to the tetrahydrofolate dehydrogenase/cyclohydrolase family. In terms of assembly, homodimer.

It carries out the reaction (6R)-5,10-methylene-5,6,7,8-tetrahydrofolate + NADP(+) = (6R)-5,10-methenyltetrahydrofolate + NADPH. The enzyme catalyses (6R)-5,10-methenyltetrahydrofolate + H2O = (6R)-10-formyltetrahydrofolate + H(+). It participates in one-carbon metabolism; tetrahydrofolate interconversion. In terms of biological role, catalyzes the oxidation of 5,10-methylenetetrahydrofolate to 5,10-methenyltetrahydrofolate and then the hydrolysis of 5,10-methenyltetrahydrofolate to 10-formyltetrahydrofolate. The sequence is that of Bifunctional protein FolD from Porphyromonas gingivalis (strain ATCC BAA-308 / W83).